Here is a 145-residue protein sequence, read N- to C-terminus: uncharacterized protein (145 aa).

Residues 63–83 (FLCLPLFLSFLVANLILWLSF) traverse the membrane as a helical segment.

Its subcellular location is the mitochondrion membrane. This is an uncharacterized protein from Arabidopsis thaliana (Mouse-ear cress).